Here is a 398-residue protein sequence, read N- to C-terminus: Stearoyl-[acyl-carrier-protein] 9-desaturase, chloroplastic (398 aa).

Residues 1–34 (MALKLHHTAFNPSMAVTSSGLPRSYHLRSHRVFM) constitute a chloroplast transit peptide. The segment at 46-66 (IPNAKKPHMPPREAHVQKTHS) is disordered. Residues Glu-140, Glu-178, His-181, Glu-231, Glu-264, and His-267 each contribute to the Fe cation site.

It belongs to the fatty acid desaturase type 2 family. Homodimer. The cofactor is Fe(2+).

Its subcellular location is the plastid. The protein localises to the chloroplast. It catalyses the reaction octadecanoyl-[ACP] + 2 reduced [2Fe-2S]-[ferredoxin] + O2 + 2 H(+) = (9Z)-octadecenoyl-[ACP] + 2 oxidized [2Fe-2S]-[ferredoxin] + 2 H2O. It participates in lipid metabolism; fatty acid metabolism. Converts stearoyl-ACP to oleoyl-ACP by introduction of a cis double bond between carbons 9 and 10 of the acyl chain. This chain is Stearoyl-[acyl-carrier-protein] 9-desaturase, chloroplastic, found in Simmondsia chinensis (Jojoba).